Consider the following 642-residue polypeptide: 5-aminolevulinate synthase, non-specific, mitochondrial (642 aa).

Residues 1-56 constitute a mitochondrion transit peptide; sequence METVVRRCPFLSRVPQAFLQKAGKSLLFYAQNCPKMMEVGAKPAPRTVSTSAAQCQ. The tract at residues 51–109 is disordered; it reads SAAQCQQVKETPPANEKEKTAKAAVQQAPDESQMAQTPDGTQLPPGHPSPSTSQSSGSK. Residues 79–90 are compositionally biased toward polar residues; the sequence is PDESQMAQTPDG. Positions 99 to 108 are enriched in low complexity; sequence SPSTSQSSGS. R219, S336, and K355 together coordinate substrate. Pyridoxal 5'-phosphate-binding residues include S388, H416, and T444. The active site involves K447. K447 bears the N6-(pyridoxal phosphate)lysine mark. Pyridoxal 5'-phosphate is bound by residues T476 and T477. T564 contributes to the substrate binding site. Hydroxyproline is present on P578.

This sequence belongs to the class-II pyridoxal-phosphate-dependent aminotransferase family. Homodimer. Interacts (hydroxylated form) with VHL. Pyridoxal 5'-phosphate serves as cofactor. In terms of processing, in normoxia, is hydroxylated at Pro-578, promoting interaction with VHL, initiating ubiquitination and subsequent degradation via the proteasome. Ubiquitinated; in normoxia following hydroxylation and interaction with VHL, leading to its subsequent degradation via the proteasome. As to expression, expressed in the liver, kidney, brain and testis.

It is found in the mitochondrion inner membrane. It catalyses the reaction succinyl-CoA + glycine + H(+) = 5-aminolevulinate + CO2 + CoA. The protein operates within porphyrin-containing compound metabolism; protoporphyrin-IX biosynthesis; 5-aminolevulinate from glycine: step 1/1. In terms of biological role, catalyzes the pyridoxal 5'-phosphate (PLP)-dependent condensation of succinyl-CoA and glycine to form aminolevulinic acid (ALA), with CoA and CO2 as by-products. This chain is 5-aminolevulinate synthase, non-specific, mitochondrial (Alas1), found in Rattus norvegicus (Rat).